We begin with the raw amino-acid sequence, 154 residues long: Myoglobin (154 aa).

The 147-residue stretch at 2 to 148 (GLSDGEWQLV…FRNDIAAKYK (147 aa)) folds into the Globin domain. At S4 the chain carries Phosphoserine. H65 is a nitrite binding site. H65 lines the O2 pocket. The residue at position 68 (T68) is a Phosphothreonine. Position 94 (H94) interacts with heme b.

The protein belongs to the globin family. Monomeric.

It localises to the cytoplasm. Its subcellular location is the sarcoplasm. It catalyses the reaction Fe(III)-heme b-[protein] + nitric oxide + H2O = Fe(II)-heme b-[protein] + nitrite + 2 H(+). The enzyme catalyses H2O2 + AH2 = A + 2 H2O. In terms of biological role, monomeric heme protein which primary function is to store oxygen and facilitate its diffusion within muscle tissues. Reversibly binds oxygen through a pentacoordinated heme iron and enables its timely and efficient release as needed during periods of heightened demand. Depending on the oxidative conditions of tissues and cells, and in addition to its ability to bind oxygen, it also has a nitrite reductase activity whereby it regulates the production of bioactive nitric oxide. Under stress conditions, like hypoxia and anoxia, it also protects cells against reactive oxygen species thanks to its pseudoperoxidase activity. This chain is Myoglobin (MB), found in Lepilemur mustelinus (Weasel sportive lemur).